The primary structure comprises 518 residues: Lysine 5,6-aminomutase alpha subunit (518 aa).

Pyridoxal 5'-phosphate-binding positions include 184 to 189, Ser-238, Tyr-263, Arg-268, and Asn-299; that span reads RTTGQS.

It belongs to the KamD family. In terms of assembly, heterotetramer of 2 alpha and 2 beta subunits. Requires adenosylcob(III)alamin as cofactor. It depends on pyridoxal 5'-phosphate as a cofactor.

It carries out the reaction (3S)-3,6-diaminohexanoate = (3S,5S)-3,5-diaminohexanoate. The catalysed reaction is D-lysine = (2R,5S)-2,5-diaminohexanoate. Its pathway is amino-acid degradation; L-lysine degradation via acetate pathway. Catalyzes the migration of the L-beta-lysine and D-lysine epsilon amino group to the delta carbon to produce 3,5-diaminohexanoate and 2,5-diaminohexanoate, respectively. This is Lysine 5,6-aminomutase alpha subunit from Fusobacterium nucleatum subsp. nucleatum (strain ATCC 25586 / DSM 15643 / BCRC 10681 / CIP 101130 / JCM 8532 / KCTC 2640 / LMG 13131 / VPI 4355).